We begin with the raw amino-acid sequence, 478 residues long: Putative multidrug resistance outer membrane protein MdtQ (478 aa).

An N-terminal signal peptide occupies residues 1 to 21 (MNRDSFYPAIACFPLLLMLAG). Cys22 carries N-palmitoyl cysteine lipidation. Cys22 carries the S-diacylglycerol cysteine lipid modification.

The protein belongs to the outer membrane factor (OMF) (TC 1.B.17) family.

It is found in the cell outer membrane. Functionally, could be involved in resistance to puromycin, acriflavine and tetraphenylarsonium chloride. This chain is Putative multidrug resistance outer membrane protein MdtQ (mdtQ), found in Shigella flexneri.